The primary structure comprises 598 residues: Probable transporter mch1 (598 aa).

The tract at residues M1–P49 is disordered. Residues S22–P37 show a composition bias toward low complexity. N57 is a glycosylation site (N-linked (GlcNAc...) asparagine). 6 helical membrane-spanning segments follow: residues A63–F83, G96–C116, G122–V142, L164–Y184, G202–L222, and V241–F261. The segment at A315–D334 is disordered. Residue N325 is glycosylated (N-linked (GlcNAc...) asparagine). 6 helical membrane passes run H355–I375, I405–A425, F453–I473, L486–W506, G516–V536, and S565–W585.

This sequence belongs to the major facilitator superfamily.

The protein resides in the vacuole membrane. Functionally, probable transporter. The polypeptide is Probable transporter mch1 (mch1) (Neurospora crassa (strain ATCC 24698 / 74-OR23-1A / CBS 708.71 / DSM 1257 / FGSC 987)).